Reading from the N-terminus, the 852-residue chain is 2-deoxy-glucose resistant protein 2 (852 aa).

Positions 1 to 18 (MFKSKTSTLSYDETPNSN) are enriched in polar residues. The disordered stretch occupies residues 1 to 60 (MFKSKTSTLSYDETPNSNEGDRNATPVNPKEKSQTKHLNIPGDRSRHSSIADSKRSSSRY). 6 WD repeats span residues 171–210 (LFKN…VKRS), 278–316 (EHAL…SLKT), 318–358 (VHPD…VSYA), 426–471 (QHGP…ELFK), 476–515 (GSSR…LSAE), and 651–689 (GFSS…EIRK). The residue at position 716 (Ser-716) is a Phosphoserine. The disordered stretch occupies residues 723-748 (DERSSTEDNEFSTTPPSNTHNSRPSH). The span at 733-744 (FSTTPPSNTHNS) shows a compositional bias: polar residues.

Belongs to the WD repeat DGR2 family.

This Saccharomyces cerevisiae (strain ATCC 204508 / S288c) (Baker's yeast) protein is 2-deoxy-glucose resistant protein 2 (DGR2).